The following is a 550-amino-acid chain: Hydroxylamine reductase (550 aa).

Cys3, Cys6, Cys18, and Cys25 together coordinate [2Fe-2S] cluster. Residues His249, Glu273, Cys317, Cys405, Cys433, Cys458, Glu492, and Lys494 each coordinate hybrid [4Fe-2O-2S] cluster. Cys405 bears the Cysteine persulfide mark.

This sequence belongs to the HCP family. Requires [2Fe-2S] cluster as cofactor. It depends on hybrid [4Fe-2O-2S] cluster as a cofactor.

Its subcellular location is the cytoplasm. The catalysed reaction is A + NH4(+) + H2O = hydroxylamine + AH2 + H(+). Its function is as follows. Catalyzes the reduction of hydroxylamine to form NH(3) and H(2)O. The protein is Hydroxylamine reductase of Pectobacterium carotovorum subsp. carotovorum (strain PC1).